The primary structure comprises 337 residues: Inositol 2-dehydrogenase (337 aa).

It belongs to the Gfo/Idh/MocA family. In terms of assembly, homotetramer.

It carries out the reaction myo-inositol + NAD(+) = scyllo-inosose + NADH + H(+). In terms of biological role, involved in the oxidation of myo-inositol (MI) to 2-keto-myo-inositol (2KMI or 2-inosose). This Ralstonia nicotianae (strain ATCC BAA-1114 / GMI1000) (Ralstonia solanacearum) protein is Inositol 2-dehydrogenase.